A 128-amino-acid polypeptide reads, in one-letter code: Ribonuclease P protein component (128 aa).

This sequence belongs to the RnpA family. As to quaternary structure, consists of a catalytic RNA component (M1 or rnpB) and a protein subunit.

The catalysed reaction is Endonucleolytic cleavage of RNA, removing 5'-extranucleotides from tRNA precursor.. In terms of biological role, RNaseP catalyzes the removal of the 5'-leader sequence from pre-tRNA to produce the mature 5'-terminus. It can also cleave other RNA substrates such as 4.5S RNA. The protein component plays an auxiliary but essential role in vivo by binding to the 5'-leader sequence and broadening the substrate specificity of the ribozyme. This chain is Ribonuclease P protein component, found in Prochlorococcus marinus (strain MIT 9303).